We begin with the raw amino-acid sequence, 282 residues long: Bifunctional protein FolD (282 aa).

NADP(+)-binding positions include 162-164 (GRS), serine 187, and valine 228.

It belongs to the tetrahydrofolate dehydrogenase/cyclohydrolase family. In terms of assembly, homodimer.

It carries out the reaction (6R)-5,10-methylene-5,6,7,8-tetrahydrofolate + NADP(+) = (6R)-5,10-methenyltetrahydrofolate + NADPH. The enzyme catalyses (6R)-5,10-methenyltetrahydrofolate + H2O = (6R)-10-formyltetrahydrofolate + H(+). It participates in one-carbon metabolism; tetrahydrofolate interconversion. Catalyzes the oxidation of 5,10-methylenetetrahydrofolate to 5,10-methenyltetrahydrofolate and then the hydrolysis of 5,10-methenyltetrahydrofolate to 10-formyltetrahydrofolate. This is Bifunctional protein FolD from Thermus thermophilus (strain ATCC 27634 / DSM 579 / HB8).